The sequence spans 974 residues: Kinesin-like protein KIN-7A (974 aa).

Residues 1–29 (MTIKTPGTPVSKMDRTPAVTPGGSSRSRE) are disordered. A Kinesin motor domain is found at 31 to 353 (KIVVTVRLRP…LYFANRAKEV (323 aa)). ATP is bound at residue 117–124 (GQTSSGKT). Coiled-coil stretches lie at residues 362–435 (VVSD…KGLN) and 565–603 (SANLKEEITRLHSQGSTIANLEEQLESVQKSIDKLVMSL). Disordered regions lie at residues 605-649 (SNIS…PCSP) and 663-713 (NKAP…SSVN). A compositionally biased stretch (basic residues) spans 616 to 628 (TKNHHHQSKKKKL). Composition is skewed to polar residues over residues 638–649 (NRQNFLKSPCSP) and 666–682 (PQENNSSAARGATTPQG). The segment covering 683–693 (SEKETPQKGEE) has biased composition (basic and acidic residues).

The protein belongs to the TRAFAC class myosin-kinesin ATPase superfamily. Kinesin family. KIN-7 subfamily. Phosphorylated at Thr-145, Thr-687 and Thr-703 by CDKAs and CDKBs. Phosphorylated NACK1 fails to mediate cytokinesis. Expressed in roots, flowers, pollen mother cells and embryos.

Its subcellular location is the cytoplasm. The protein localises to the cytoskeleton. The protein resides in the phragmoplast. Probable plus end-directed motor protein that functions in the NACK-PQR (ANP1-MKK6-MPK4) MAP kinase signaling pathway, which is essential for somatic cell cytokinesis, especially for the cell-plate formation and its expansion. Regulates the activity and the localization of ANP1, probably by association through the non-catalytic region of the kinase. Functionally redundant with NACK2 and essential to promote the progression of cytokinesis and for cellularization (formation of the cell plate) during microgametogenesis and megagametogenesis. In Arabidopsis thaliana (Mouse-ear cress), this protein is Kinesin-like protein KIN-7A.